A 273-amino-acid chain; its full sequence is MIRIASLLLGAALLCAQGAFARRVVSGQKVCFADVKHPCYKMAYFHELSSRVSFQEARLACESEGGVLLSLENEAEQKLIESMLQNLTKPGTGISDGDFWIGLLRSGDGQTSGACPDLYQWSDGSSSQFRNWYTDEPSCGSEKCVVMYHQPTANPGLGGPYLYQWNDDRCNMKHNYICKYEPEIHPTEPAEKPYLTNQPEETHENVVVTEAGIIPNLIYVIIPTIPLLLLILVALGTCCFQMLHKSKGRSKTSPNQSTLWISKSTRKESGMEV.

An N-terminal signal peptide occupies residues 1 to 21 (MIRIASLLLGAALLCAQGAFA). At 22–216 (RRVVSGQKVC…VVTEAGIIPN (195 aa)) the chain is on the extracellular side. The region spanning 35–179 (VKHPCYKMAY…CNMKHNYICK (145 aa)) is the C-type lectin domain. 2 cysteine pairs are disulfide-bonded: cysteine 61–cysteine 178 and cysteine 144–cysteine 170. Asparagine 86 is a glycosylation site (N-linked (GlcNAc...) asparagine). The chain crosses the membrane as a helical span at residues 217 to 237 (LIYVIIPTIPLLLLILVALGT). Over 238-273 (CCFQMLHKSKGRSKTSPNQSTLWISKSTRKESGMEV) the chain is Cytoplasmic. The disordered stretch occupies residues 247 to 273 (KGRSKTSPNQSTLWISKSTRKESGMEV). Positions 251 to 263 (KTSPNQSTLWISK) are enriched in polar residues.

In terms of assembly, interacts with RABGGTB. In adult mice preferentially expressed in skeletal muscle, testis, brain, and lung. Expressed in striated muscle (at protein level). Expressed in spinal cord. Detected in spinal cord fast motor neurons (at protein level).

Its subcellular location is the membrane. Its function is as follows. May play a role in the development of the nervous system such as in neurite outgrowth and elongation. May be involved in motor axon growth and guidance. The sequence is that of Chondrolectin (Chodl) from Mus musculus (Mouse).